A 441-amino-acid polypeptide reads, in one-letter code: GTPase Der (441 aa).

EngA-type G domains are found at residues 2-164 (HKVA…PADD) and 173-343 (IRIS…DKWQ). Residues 8–15 (GRPNVGKS), 55–59 (DTGGL), 116–119 (NKID), 179–186 (GRPNVGKS), 226–230 (DTAGI), and 288–291 (NKWD) contribute to the GTP site.

This sequence belongs to the TRAFAC class TrmE-Era-EngA-EngB-Septin-like GTPase superfamily. EngA (Der) GTPase family. Associates with the 50S ribosomal subunit.

In terms of biological role, GTPase that plays an essential role in the late steps of ribosome biogenesis. This Deinococcus deserti (strain DSM 17065 / CIP 109153 / LMG 22923 / VCD115) protein is GTPase Der.